Here is a 579-residue protein sequence, read N- to C-terminus: Mitogen-activated protein kinase kinase kinase 7 (579 aa).

Residues 1–300 form an interaction with MAPK8IP1 region; that stretch reads MSTASAASSS…FPGADEPLQY (300 aa). The Protein kinase domain occupies 36-291; it reads IEVEEVVGRG…KIMTHLMRYF (256 aa). Residues 42–50 and Lys63 contribute to the ATP site; that span reads VGRGAFGVV. Residue Lys72 forms a Glycyl lysine isopeptide (Lys-Gly) (interchain with G-Cter in ubiquitin) linkage. Asp156 acts as the Proton acceptor in catalysis. Lys158 is covalently cross-linked (Glycyl lysine isopeptide (Lys-Gly) (interchain with G-Cter in ubiquitin)). A phosphothreonine; by autocatalysis mark is found at Thr184 and Thr187. At Ser192 the chain carries Phosphoserine; by autocatalysis. Residue Lys209 forms a Glycyl lysine isopeptide (Lys-Gly) (interchain with G-Cter in ubiquitin) linkage. 2 disordered regions span residues 301–338 and 354–391; these read PCQY…MEQV and KNQA…MSAD. Residues 306–338 show a composition bias toward polar residues; the sequence is DEGQSNSATSTGSFMDIASTNTSNKSDTNMEQV. Low complexity predominate over residues 361–375; sequence SESGRLSLGASRGSS. Phosphoserine occurs at positions 367, 389, and 412. Residues 416–425 are compositionally biased toward polar residues; it reads LTVTGTEPGQ. Residues 416–466 form a disordered region; it reads LTVTGTEPGQVSSRSSSPSVRMITTSGPTSEKPARSHPWTPDDSTDTNGSD. The span at 426 to 436 shows a compositional bias: low complexity; that stretch reads VSSRSSSPSVR. Position 428 is a phosphoserine (Ser428).

The protein belongs to the protein kinase superfamily. STE Ser/Thr protein kinase family. MAP kinase kinase kinase subfamily. Can form homodimer. Binds both upstream activators and downstream substrates in multimolecular complexes. Interacts with TAB1/MAP3K7IP1, TAB2/MAP3K7IP2 and TAB3/MAP3K7IP3. Identified in the TRIKA2 complex composed of MAP3K7/TAK1, TAB1/MAP3K7IP1 and TAB2/MAP3K7IP2. Interacts with PPM1L and PPM1B/PP2CB. Interaction with PP2A and PPP6C leads to its repressed activity. Interacts with TRAF6 and TAB1/MAP3K7IP1; during IL-1 signaling. Interacts with TAOK1 and TAOK2; interaction with TAOK2 interferes with MAP3K7 interaction with IKKA, thus preventing NF-kappa-B activation. Interacts with DYNC2I2 (via WD domains). Interacts with CYLD and RBCK1. Interacts with TGFBR1; induces MAP3K7/TAK1 activation by TRAF6. Interacts with MAPK8IP1 and SMAD6. Interacts with isoform 1 of VRK2. Interacts with DAB2; the interaction is induced by TGF-beta stimulation and may mediate TGF-beta stimulated JNK activation. Interacts with TRIM5. Part of a complex containing ITCH, NDFIP1 and MAP3K7. Interacts with PLEKHM1 (via N- and C-terminus). Interacts with TRIM8. Found in a complex with SH3RF1, RAC2, MAP2K7/MKK7, MAPK8IP1/JIP1, MAPK8/JNK1 and MAPK9/JNK2. Interacts with SASH1. Interacts with RIPK1. Mg(2+) serves as cofactor. Post-translationally, association with TAB1/MAP3K7IP1 promotes autophosphorylation and subsequent activation. Association with TAB2/MAP3K7IP2, itself associated with free unanchored Lys-63 polyubiquitin chain, promotes autophosphorylation and subsequent activation of MAP3K7. Dephosphorylation at Thr-187 by PP2A and PPP6C leads to inactivation. In terms of processing, 'Lys-48'-linked polyubiquitination at Lys-72 is induced by TNFalpha, and leads to proteasomal degradation. Undergoes 'Lys-48'-linked polyubiquitination catalyzed by ITCH. 'Lys-63'-linked polyubiquitination at Lys-158 by TRIM8 does not lead to proteasomal degradation but contributes to autophosphorylation and activation. Deubiquitinated by CYLD, a protease that selectively cleaves 'Lys-63'-linked ubiquitin chains.Deubiquitinated by USP19; leading to negative regulation of TNF-alpha- and IL-1beta-triggered NF-kappa-B activation.

It localises to the cytoplasm. It is found in the cell membrane. It catalyses the reaction L-seryl-[protein] + ATP = O-phospho-L-seryl-[protein] + ADP + H(+). The catalysed reaction is L-threonyl-[protein] + ATP = O-phospho-L-threonyl-[protein] + ADP + H(+). Activated by pro-inflammatory cytokines and in response to physical and chemical stresses, including osmotic stress, oxidative stress, arsenic and ultraviolet light irradiation. Activated by 'Lys-63'-linked polyubiquitination and by autophosphorylation. Association with TAB1/MAP3K7IP1 and TAB2/MAP3K7IP2 promotes activation through autophosphorylation, whereas PPM1B/PP2CB, PP2A and PPP6C dephosphorylation leads to inactivation. Ceramides are also able to activate MAP3K7/TAK1. Its function is as follows. Serine/threonine kinase which acts as an essential component of the MAP kinase signal transduction pathway. Plays an important role in the cascades of cellular responses evoked by changes in the environment. Mediates signal transduction of TRAF6, various cytokines including interleukin-1 (IL-1), transforming growth factor-beta (TGFB), TGFB-related factors like BMP2 and BMP4, toll-like receptors (TLR), tumor necrosis factor receptor CD40 and B-cell receptor (BCR). Once activated, acts as an upstream activator of the MKK/JNK signal transduction cascade and the p38 MAPK signal transduction cascade through the phosphorylation and activation of several MAP kinase kinases like MAP2K1/MEK1, MAP2K3/MKK3, MAP2K6/MKK6 and MAP2K7/MKK7. These MAP2Ks in turn activate p38 MAPKs and c-jun N-terminal kinases (JNKs); both p38 MAPK and JNK pathways control the transcription factors activator protein-1 (AP-1). Independently of MAP2Ks and p38 MAPKs, acts as a key activator of NF-kappa-B by promoting activation of the I-kappa-B-kinase (IKK) core complex. Mechanistically, recruited to polyubiquitin chains of RIPK2 and IKBKG/NEMO via TAB2/MAP3K7IP2 and TAB3/MAP3K7IP3, and catalyzes phosphorylation and activation of IKBKB/IKKB component of the IKK complex, leading to NF-kappa-B activation. In osmotic stress signaling, plays a major role in the activation of MAPK8/JNK1, but not that of NF-kappa-B. Promotes TRIM5 capsid-specific restriction activity. Phosphorylates RIPK1 at 'Ser-321' which positively regulates RIPK1 interaction with RIPK3 to promote necroptosis but negatively regulates RIPK1 kinase activity and its interaction with FADD to mediate apoptosis. Phosphorylates STING1 in response to cGAMP-activation, promoting association between STEEP1 and STING1 and STING1 translocation to COPII vesicles. This is Mitogen-activated protein kinase kinase kinase 7 (Map3k7) from Mus musculus (Mouse).